Consider the following 561-residue polypeptide: Dihydroxy-acid dehydratase (561 aa).

[2Fe-2S] cluster is bound at residue cysteine 50. Aspartate 82 provides a ligand contact to Mg(2+). Cysteine 123 is a [2Fe-2S] cluster binding site. 2 residues coordinate Mg(2+): aspartate 124 and lysine 125. Lysine 125 bears the N6-carboxylysine mark. Residue cysteine 195 coordinates [2Fe-2S] cluster. Glutamate 447 is a Mg(2+) binding site. Serine 473 functions as the Proton acceptor in the catalytic mechanism.

Belongs to the IlvD/Edd family. In terms of assembly, homodimer. Requires [2Fe-2S] cluster as cofactor. Mg(2+) is required as a cofactor.

It catalyses the reaction (2R)-2,3-dihydroxy-3-methylbutanoate = 3-methyl-2-oxobutanoate + H2O. The enzyme catalyses (2R,3R)-2,3-dihydroxy-3-methylpentanoate = (S)-3-methyl-2-oxopentanoate + H2O. The protein operates within amino-acid biosynthesis; L-isoleucine biosynthesis; L-isoleucine from 2-oxobutanoate: step 3/4. It functions in the pathway amino-acid biosynthesis; L-valine biosynthesis; L-valine from pyruvate: step 3/4. Functions in the biosynthesis of branched-chain amino acids. Catalyzes the dehydration of (2R,3R)-2,3-dihydroxy-3-methylpentanoate (2,3-dihydroxy-3-methylvalerate) into 2-oxo-3-methylpentanoate (2-oxo-3-methylvalerate) and of (2R)-2,3-dihydroxy-3-methylbutanoate (2,3-dihydroxyisovalerate) into 2-oxo-3-methylbutanoate (2-oxoisovalerate), the penultimate precursor to L-isoleucine and L-valine, respectively. This chain is Dihydroxy-acid dehydratase, found in Rippkaea orientalis (strain PCC 8801 / RF-1) (Cyanothece sp. (strain PCC 8801)).